The sequence spans 786 residues: von Willebrand factor A domain-containing protein 5A (786 aa).

The region spanning 1 to 131 (MVHFCGLLTL…KAAVTLKYVQ (131 aa)) is the VIT domain. One can recognise a VWFA domain in the interval 281–462 (EFIFLMDRSG…KALRTLKRSL (182 aa)).

In terms of tissue distribution, expressed at low level in many tissues. Not expressed in 80% of tumor cell lines tested.

Its function is as follows. May play a role in tumorigenesis as a tumor suppressor. Altered expression of this protein and disruption of the molecular pathway it is involved in, may contribute directly to or modify tumorigenesis. The protein is von Willebrand factor A domain-containing protein 5A (VWA5A) of Homo sapiens (Human).